The sequence spans 234 residues: Leucyl/phenylalanyl-tRNA--protein transferase (234 aa).

Belongs to the L/F-transferase family.

The protein localises to the cytoplasm. It carries out the reaction N-terminal L-lysyl-[protein] + L-leucyl-tRNA(Leu) = N-terminal L-leucyl-L-lysyl-[protein] + tRNA(Leu) + H(+). It catalyses the reaction N-terminal L-arginyl-[protein] + L-leucyl-tRNA(Leu) = N-terminal L-leucyl-L-arginyl-[protein] + tRNA(Leu) + H(+). The catalysed reaction is L-phenylalanyl-tRNA(Phe) + an N-terminal L-alpha-aminoacyl-[protein] = an N-terminal L-phenylalanyl-L-alpha-aminoacyl-[protein] + tRNA(Phe). Functionally, functions in the N-end rule pathway of protein degradation where it conjugates Leu, Phe and, less efficiently, Met from aminoacyl-tRNAs to the N-termini of proteins containing an N-terminal arginine or lysine. This is Leucyl/phenylalanyl-tRNA--protein transferase from Pectobacterium carotovorum subsp. carotovorum (strain PC1).